The following is an 895-amino-acid chain: Probable aminodeoxychorismate synthase, chloroplastic (895 aa).

The tract at residues 1 to 45 is disordered; the sequence is MAALRLPTPPPPRAPAPWLHSSHRRRVAAPRGAGGGGGGGGAVPP. A chloroplast-targeting transit peptide spans 1 to 48; sequence MAALRLPTPPPPRAPAPWLHSSHRRRVAAPRGAGGGGGGGGAVPPPPV. Gly residues predominate over residues 32-42; that stretch reads GAGGGGGGGGA. The region spanning 49-307 is the Glutamine amidotransferase type-1 domain; that stretch reads RTLLIDNYDS…KKITTDFGLQ (259 aa). The Nucleophile role is filled by Cys-135. Catalysis depends on residues His-281 and Glu-283. The tract at residues 387–875 is PABB component; that stretch reads IFSVLFGHHS…KAKAPTKVVE (489 aa).

It in the C-terminal section; belongs to the anthranilate synthase component I family.

It is found in the plastid. Its subcellular location is the chloroplast. It catalyses the reaction chorismate + L-glutamine = 4-amino-4-deoxychorismate + L-glutamate. The protein operates within cofactor biosynthesis; tetrahydrofolate biosynthesis; 4-aminobenzoate from chorismate: step 1/2. It functions in the pathway antibiotic biosynthesis; candicidin biosynthesis. Bifunctional enzyme that catalyzes the biosynthesis of 4-amino-4-deoxychorismate (ADC) from chorismate and glutamine. In the first step, a glutamine amidotransferase generates ammonia that is channelled between the binding sites of glutamine and chorismate and used along with chorismate in the second step, catalyzed by aminodeoxychorismate synthase, to produce ADC. Required for the synthesis of 4-aminobenzoate (PABA), an important component in tetrahydrofolate biosynthesis. Does not possess ADC lyase activity. This Oryza sativa subsp. japonica (Rice) protein is Probable aminodeoxychorismate synthase, chloroplastic (ADCS).